A 217-amino-acid polypeptide reads, in one-letter code: Probable transaldolase (217 aa).

Catalysis depends on Lys-83, which acts as the Schiff-base intermediate with substrate.

This sequence belongs to the transaldolase family. Type 3B subfamily.

The protein resides in the cytoplasm. It carries out the reaction D-sedoheptulose 7-phosphate + D-glyceraldehyde 3-phosphate = D-erythrose 4-phosphate + beta-D-fructose 6-phosphate. It functions in the pathway carbohydrate degradation; pentose phosphate pathway; D-glyceraldehyde 3-phosphate and beta-D-fructose 6-phosphate from D-ribose 5-phosphate and D-xylulose 5-phosphate (non-oxidative stage): step 2/3. Functionally, transaldolase is important for the balance of metabolites in the pentose-phosphate pathway. The chain is Probable transaldolase from Fervidobacterium nodosum (strain ATCC 35602 / DSM 5306 / Rt17-B1).